Reading from the N-terminus, the 257-residue chain is Putative hydro-lyase YcsI (257 aa).

Belongs to the D-glutamate cyclase family.

This Bacillus subtilis (strain 168) protein is Putative hydro-lyase YcsI (ycsI).